The primary structure comprises 36 residues: Neurotoxin PRTx26An0C3 (36 aa).

3 disulfides stabilise this stretch: cysteine 3–cysteine 17, cysteine 10–cysteine 22, and cysteine 16–cysteine 34.

In terms of tissue distribution, expressed by the venom gland.

It is found in the secreted. Neurotoxin. Causes spastic paralysis and death in mice. Moderate inhibitor of L-type calcium channels (Cav1/CACNA1). This Phoneutria nigriventer (Brazilian armed spider) protein is Neurotoxin PRTx26An0C3.